Consider the following 626-residue polypeptide: Hormonally up-regulated neu tumor-associated kinase homolog B (626 aa).

Residues 1 to 2 and lysine 17 contribute to the ATP site; that span reads KV. The 246-residue stretch at 1–246 folds into the Protein kinase domain; that stretch reads KVREGLHVGT…IQQALANRWL (246 aa). Aspartate 112 serves as the catalytic Proton acceptor. Over residues 336-357 the composition is skewed to basic and acidic residues; that stretch reads KYKMNKNSYEERRSKDLEKRGE. Disordered stretches follow at residues 336 to 407, 477 to 574, and 590 to 615; these read KYKM…ESFG, VNRE…RSRG, and QVVS…PGYA. A compositionally biased stretch (polar residues) spans 374–390; it reads SHRQSTCLTPQGHSSSK. Positions 392–405 are enriched in basic and acidic residues; sequence PIKERRSSKSERES. The span at 518 to 532 shows a compositional bias: polar residues; that stretch reads DNTSPLKGHSNQASF. Positions 539 to 555 are enriched in low complexity; the sequence is SPSSPESMSPTSPHSPS. The segment covering 556-566 has biased composition (polar residues); it reads CNNNISGNLGS.

This sequence belongs to the protein kinase superfamily. CAMK Ser/Thr protein kinase family. SNF1 subfamily. In the egg, expressed predominantly in the animal hemisphere. This pattern of expression persists throughout the cleavage and blastula stages. At the gastrula stage, expression is restricted to the ectoderm. In later-stage embryos, expressed over the entire embryonic surface including the open neural plate at stage 15 and the neural tube at stage 22. In tadpoles, strongly expressed in the neural tube, motor neurons, brain regions and sensory organs (otic vesicle and eye). Also expressed in the perisomitic mesoderm, brachial arches and embryonic epidermis of tadpoles.

It catalyses the reaction L-seryl-[protein] + ATP = O-phospho-L-seryl-[protein] + ADP + H(+). The catalysed reaction is L-threonyl-[protein] + ATP = O-phospho-L-threonyl-[protein] + ADP + H(+). The sequence is that of Hormonally up-regulated neu tumor-associated kinase homolog B (hunk-b) from Xenopus laevis (African clawed frog).